The sequence spans 596 residues: Structural protein precursor VP8 (596 aa).

The protein resides in the virion. Its function is as follows. 120 subunits of the putative clamp protein VP8b appear to stabilize the capsid shell. This chain is Structural protein precursor VP8, found in Oryza latifolia (Indian wild rice).